The primary structure comprises 157 residues: MPRRRVVAKREILPDPKHGSQILAKFINHVMVSGKKSVAESIVYNALNTVAARAKTEEPMAIFEKALESIQPMVEVKSRRVGGATYQVPVEVRPARRAALSMRWLVDASRKRGEKSMALRLAGEILDAAENKGSAVKKREDVHRMAEANKAFSHYRF.

It belongs to the universal ribosomal protein uS7 family. In terms of assembly, part of the 30S ribosomal subunit. Contacts proteins S9 and S11.

One of the primary rRNA binding proteins, it binds directly to 16S rRNA where it nucleates assembly of the head domain of the 30S subunit. Is located at the subunit interface close to the decoding center, probably blocks exit of the E-site tRNA. The sequence is that of Small ribosomal subunit protein uS7 from Marinomonas sp. (strain MWYL1).